Here is a 231-residue protein sequence, read N- to C-terminus: Putative carboxymethylenebutenolidase (231 aa).

Catalysis depends on residues D169 and H200.

It belongs to the dienelactone hydrolase family.

It carries out the reaction 2-(5-oxo-2,5-dihydrofuran-2-ylidene)acetate + H2O = 4-oxohex-2-enedioate + H(+). This chain is Putative carboxymethylenebutenolidase, found in Azospirillum brasilense.